We begin with the raw amino-acid sequence, 740 residues long: Gramillins biosynthetic cluster protein FGSG_11657 (740 aa).

Disordered regions lie at residues 353–391 (QADS…SSIP), 414–434 (SKLS…DAAS), 514–535 (PKEQ…GSSD), and 656–686 (EHEG…PQGD). Residues 656 to 667 (EHEGEGRADTNR) are compositionally biased toward basic and acidic residues. The segment covering 668–682 (HVSTQSNMPTEQSLL) has biased composition (polar residues).

It participates in mycotoxin biosynthesis. Functionally, part of the gene cluster that mediates the biosynthesis of gramillins A and B, bicyclic lipopeptides that induce cell death in maize leaves but not in wheat leaves. The nonribosomal peptide synthetase GRA1 incorporates respectively a glutamic adic (Glu), a leucine (Leu), a serine (Ser), a hydroxyglutamine (HOGln), a 2-amino decanoic acid, and 2 cysteins (CysB and CysA). The biosynthesis of 2-amino decanoic acid incorporated in gramillins could be initiated by a fatty acid synthase composed of the alpha and beta subunits FGSG_00036 and FGSG_11656. The cytochrome P450 monooxygenase FGSG_15680 could hydroxylate the fatty acid chain. Subsequent oxidation to the ketone by the oxidoreductase FGSG_00048 and transamination by aminotransferase FGSG_00049 could form 2-amino-decanoic acid. On the other hand, FGSG_15680 could also be responsible for the HO-modified glutamine at the gamma-position. Whether hydroxylation occurs on the fully assembled product or on the Gln residue prior to assembly into the gramillins requires further proof. The thioredoxin FGSG_00043 could also be required for the disulfide-bond formation between CysA and CysB. The specific involvement of the remaining proteins from the cluster is more difficult to discern, but could have broader regulatory (FGSG_00040 and FGSG_11657) or enzymatic functions (FGSG_00044 and FGSG_00045). The final C-domain of GRA1 does not possess the expected sequence of a termination CT domain, often implicated in macrocyclization and release of a cyclopeptidein fungal NRPs; and the thioesterase FGSG_00047 may act in concert with the terminal C-domain of GRA1 to catalyze the formation of the macrocyclic anhydride and release of the products. This Gibberella zeae (strain ATCC MYA-4620 / CBS 123657 / FGSC 9075 / NRRL 31084 / PH-1) (Wheat head blight fungus) protein is Gramillins biosynthetic cluster protein FGSG_11657.